A 357-amino-acid polypeptide reads, in one-letter code: MVSGGRVGGGEGEAGEAAEVAVAMVDNEEEMAQAQAPPAAAVAARELVVGYALTSKKAKSFLQPKLRGLARKKGILFVAIDQKRPLSDQGPFDIVLHKLTGREWQQLLEEYREEHPEVTVLDPPGAIEHLLNRQSMLQEVSELDLSDCHGRVGVPKQLFVNTDPSSIPAAVMRAGLSLPLVAKPLVAKSHELSLAYDPISLTKLEPPLVLQEFVNHGGVLFKVYIVGDAIRVVRRFSLPNVDVGDLSNNAGVFRFPRVSCASANADDADLDPHVAELPPRPLLEILARELRRRLGLRLFNIDMIREHGTRDRFYVIDMNYFPGYGKMPGYEHVFTDFLLSLVQKEYKRRPSYSSCEG.

Residues Lys56 and Lys98 each coordinate 1D-myo-inositol 1,3,4-trisphosphate. Residues Arg133 and Lys183 each contribute to the ATP site. Residues His190 and Lys222 each coordinate 1D-myo-inositol 1,3,4-trisphosphate. ATP-binding positions include 211–222 (QEFVNHGGVLFK), Ser237, and Ser262. Positions 302, 317, and 319 each coordinate Mg(2+). Asn319 contributes to the 1D-myo-inositol 1,3,4-trisphosphate binding site.

It belongs to the ITPK1 family. Monomer. Mg(2+) serves as cofactor. As to expression, expressed in roots, leaves, flowers, anthers and embryos.

The catalysed reaction is 1D-myo-inositol 3,4,5,6-tetrakisphosphate + ATP = 1D-myo-inositol 1,3,4,5,6-pentakisphosphate + ADP + H(+). It carries out the reaction 1D-myo-inositol 1,3,4-trisphosphate + ATP = 1D-myo-inositol 1,3,4,5-tetrakisphosphate + ADP + H(+). The enzyme catalyses 1D-myo-inositol 1,3,4-trisphosphate + ATP = 1D-myo-inositol 1,3,4,6-tetrakisphosphate + ADP + H(+). Kinase that can phosphorylate various inositol polyphosphate such as Ins(3,4,5,6)P4 or Ins(1,3,4)P3 and participates in phytic acid biosynthesis in developing seeds. Phytic acid is the primary storage form of phosphorus in cereal grains and other plant seeds. In Oryza sativa subsp. japonica (Rice), this protein is Inositol-tetrakisphosphate 1-kinase 3.